The primary structure comprises 206 residues: 3-isopropylmalate dehydratase small subunit (206 aa).

This sequence belongs to the LeuD family. LeuD type 1 subfamily. In terms of assembly, heterodimer of LeuC and LeuD.

It catalyses the reaction (2R,3S)-3-isopropylmalate = (2S)-2-isopropylmalate. The protein operates within amino-acid biosynthesis; L-leucine biosynthesis; L-leucine from 3-methyl-2-oxobutanoate: step 2/4. Functionally, catalyzes the isomerization between 2-isopropylmalate and 3-isopropylmalate, via the formation of 2-isopropylmaleate. The protein is 3-isopropylmalate dehydratase small subunit of Leptospira interrogans serogroup Icterohaemorrhagiae serovar copenhageni (strain Fiocruz L1-130).